Here is a 177-residue protein sequence, read N- to C-terminus: Bifunctional protein PyrR (177 aa).

The short motif at Val-99–Thr-111 is the PRPP-binding element.

The protein belongs to the purine/pyrimidine phosphoribosyltransferase family. PyrR subfamily.

The enzyme catalyses UMP + diphosphate = 5-phospho-alpha-D-ribose 1-diphosphate + uracil. In terms of biological role, regulates the transcription of the pyrimidine nucleotide (pyr) operon in response to exogenous pyrimidines. Functionally, also displays a weak uracil phosphoribosyltransferase activity which is not physiologically significant. This is Bifunctional protein PyrR from Akkermansia muciniphila (strain ATCC BAA-835 / DSM 22959 / JCM 33894 / BCRC 81048 / CCUG 64013 / CIP 107961 / Muc).